A 378-amino-acid chain; its full sequence is Protein RecA (378 aa).

An ATP-binding site is contributed by 79-86; the sequence is GPESSGKT.

The protein belongs to the RecA family.

It is found in the cytoplasm. Can catalyze the hydrolysis of ATP in the presence of single-stranded DNA, the ATP-dependent uptake of single-stranded DNA by duplex DNA, and the ATP-dependent hybridization of homologous single-stranded DNAs. It interacts with LexA causing its activation and leading to its autocatalytic cleavage. The polypeptide is Protein RecA (Streptococcus pyogenes serotype M12 (strain MGAS2096)).